A 670-amino-acid polypeptide reads, in one-letter code: MHAIQEEIKQLTSVLNEHNYRYYVDDAPSVPDAEYDRLINRLKQLEAENPELCLPDSPTQRVGGVALAKFNQITHLKPMLSLDNVFSEDEFDAFYKRISDKTSETPTFCCEPKLDGLAVSILYRDGVYERAATRGDGSVGEDITENVRTIRSIPLKLRGSDFPPLLEVRGEVIMPKKAFDSLNDRARAKGEKLFVNPRNAAAGSLRQLDSKITASRALGFYAYALGVVEPESWPLGKGHHEQLMQLKSWGFPVSSEVKLCGDVKTVLDYYADILERREALDYEIDGVVIKVDSIEHQLQLGFVAKAPRWATAFKFPAQEEMTLLEGVDFQVGRTGAVTPVARLKPVFVGGVTVSNATLHNADEIARLGVKVGDTVIVRRAGDVIPQVVAIVAEKRPVSANDILFPQTCPVCDSMVERTEGEAVARCTGGLFCEAQRKEAIKHFASRKALNVDGMGDKVVEQLIDKELVASPADLFRLTASAMTMLDRMGMKSATKLVAAIEDAKQTTFARFLYGLGIREVGEATAANLANYFKNLDKLKSADADEFIKVDDVGAIVAQHLTYFFAQPHNLEVVDNLVQAGVHWPEIEEVAEEALSLKGQTWVLTGTLTKLNRNDAKAQLQALGAKVAGSVSKNTDCLVAGEAAGSKLTKAQDLGVKVLDEDGLLAVLAGE.

Residues 32-36 (DAEYD), 81-82 (SL), and Glu111 contribute to the NAD(+) site. Lys113 (N6-AMP-lysine intermediate) is an active-site residue. NAD(+) is bound by residues Arg134, Glu171, Lys290, and Lys314. The Zn(2+) site is built by Cys408, Cys411, Cys426, and Cys432. In terms of domain architecture, BRCT spans 591–670 (EEALSLKGQT…DGLLAVLAGE (80 aa)).

Belongs to the NAD-dependent DNA ligase family. LigA subfamily. Mg(2+) is required as a cofactor. Requires Mn(2+) as cofactor.

The enzyme catalyses NAD(+) + (deoxyribonucleotide)n-3'-hydroxyl + 5'-phospho-(deoxyribonucleotide)m = (deoxyribonucleotide)n+m + AMP + beta-nicotinamide D-nucleotide.. Its function is as follows. DNA ligase that catalyzes the formation of phosphodiester linkages between 5'-phosphoryl and 3'-hydroxyl groups in double-stranded DNA using NAD as a coenzyme and as the energy source for the reaction. It is essential for DNA replication and repair of damaged DNA. This Shewanella sediminis (strain HAW-EB3) protein is DNA ligase.